A 706-amino-acid polypeptide reads, in one-letter code: ABC transporter D family member 2, chloroplastic (706 aa).

Residues 1–44 (MILMITAPVCPPHLLLRHSSLLRHESSIGNFHRKKNPRFRTVSC) constitute a chloroplast transit peptide. An N-acetylserine modification is found at Ser45. The next 5 helical transmembrane spans lie at 88 to 108 (LAAV…FNFL), 124 to 144 (FTKQ…FFVL), 200 to 222 (TALS…SNIL), 237 to 257 (SFGG…LNFL), and 326 to 346 (ILPV…FGVI). The region spanning 88–372 (LAAVFALTLA…VVYQFQAISS (285 aa)) is the ABC transmembrane type-1 domain. One can recognise an ABC transporter domain in the interval 430 to 697 (LEIEELTLQT…DAQDSLYGRL (268 aa)). An ATP-binding site is contributed by 464–471 (GPSGSGKT). The disordered stretch occupies residues 545 to 569 (TTPGGSNIDGSPPLLIREDGNEKPT). Residues 560-569 (IREDGNEKPT) show a composition bias toward basic and acidic residues.

It belongs to the ABC transporter superfamily. ABCD family. Peroxisomal fatty acyl CoA transporter (TC 3.A.1.203) subfamily. As to quaternary structure, homodimer or heterodimer.

It localises to the membrane. The protein resides in the plastid. It is found in the chloroplast. The sequence is that of ABC transporter D family member 2, chloroplastic (ABCC2) from Arabidopsis thaliana (Mouse-ear cress).